Here is a 67-residue protein sequence, read N- to C-terminus: Large ribosomal subunit protein uL29 (67 aa).

This sequence belongs to the universal ribosomal protein uL29 family.

This Methanothrix thermoacetophila (strain DSM 6194 / JCM 14653 / NBRC 101360 / PT) (Methanosaeta thermophila) protein is Large ribosomal subunit protein uL29.